The sequence spans 418 residues: MLTKAPRGTKDILPSESYKWQYIEGLIREICDVYGFKEIRTPGFEHTELFLRGVGESTDIVRKEMYTFTDKGGRSITLKPEGTSPAVRAFIEHNLYAETQPTKLYYITPVYRYERPQSGRLREHHQFGVEIFGAKSASADAEVISVAMTLLKKLGLNNLELRINSVGCPVCRKNYNKVLKEFLKNNLEYLCDDCKVRYEINPLRVLDCKVESCQRITKDAPLITDYLCDDCKSHFEELQKYLDIMGYDYIIDPRIVRGLDYYTKTAFEIISKDIGAQGTVCGGGRYDGLIEECGGPSMPGVGFGMGLERLLITLEQNGIEIPKPEGVDLFIAYVGEEAKLFTFALANKLRFNGLKVERDNMDRSLKAQMKYANKLNAKFAIVIGEEEMKENKVKLKDMRVGSEVEISIDEIEQRIKNI.

It belongs to the class-II aminoacyl-tRNA synthetase family. In terms of assembly, homodimer.

The protein localises to the cytoplasm. The catalysed reaction is tRNA(His) + L-histidine + ATP = L-histidyl-tRNA(His) + AMP + diphosphate + H(+). This Thermoanaerobacter pseudethanolicus (strain ATCC 33223 / 39E) (Clostridium thermohydrosulfuricum) protein is Histidine--tRNA ligase.